Reading from the N-terminus, the 332-residue chain is NAD-dependent protein deacetylase hst2 (332 aa).

The 263-residue stretch at 7–269 (KHVDSSKHLE…RALCKLLGWS (263 aa)) folds into the Deacetylase sirtuin-type domain. NAD(+) is bound by residues 35 to 55 (GAGI…TGIY) and 118 to 121 (QNID). The Proton acceptor role is filled by H138. Zn(2+) contacts are provided by C146, C149, C170, and C173. Residues 210-212 (GTS), 235-237 (NRE), and C255 contribute to the NAD(+) site.

Belongs to the sirtuin family. Class I subfamily. Requires Zn(2+) as cofactor.

The protein localises to the cytoplasm. It localises to the nucleus. It catalyses the reaction N(6)-acetyl-L-lysyl-[protein] + NAD(+) + H2O = 2''-O-acetyl-ADP-D-ribose + nicotinamide + L-lysyl-[protein]. NAD-dependent histone deacetylase, which could function in telomeric silencing, cell cycle progression and chromosome stability. This is NAD-dependent protein deacetylase hst2 (hst2) from Schizosaccharomyces pombe (strain 972 / ATCC 24843) (Fission yeast).